The chain runs to 176 residues: ATP-dependent protease subunit HslV (176 aa).

Residue T5 is part of the active site. Na(+) is bound by residues S161, C164, and T167.

It belongs to the peptidase T1B family. HslV subfamily. In terms of assembly, a double ring-shaped homohexamer of HslV is capped on each side by a ring-shaped HslU homohexamer. The assembly of the HslU/HslV complex is dependent on binding of ATP.

The protein resides in the cytoplasm. It catalyses the reaction ATP-dependent cleavage of peptide bonds with broad specificity.. Its activity is regulated as follows. Allosterically activated by HslU binding. Protease subunit of a proteasome-like degradation complex believed to be a general protein degrading machinery. The sequence is that of ATP-dependent protease subunit HslV from Desulfitobacterium hafniense (strain DSM 10664 / DCB-2).